We begin with the raw amino-acid sequence, 621 residues long: Archaeal Lon protease (621 aa).

Residues 1 to 117 (MNEEVREILG…YKEEAMKKAQ (117 aa)) lie on the Cytoplasmic side of the membrane. 54 to 61 (GSPGTGKS) serves as a coordination point for ATP. The helical transmembrane segment at 118-136 (ARNFLIFTLVFLVIGYTVL) threads the bilayer. The Extracellular segment spans residues 137 to 141 (TNPGN). The chain crosses the membrane as a helical span at residues 142–160 (LIWGIIAAVLILMMSRYFI). The Cytoplasmic portion of the chain corresponds to 161–621 (PREDRNVPKL…KFKELELAAV (461 aa)). The Lon proteolytic domain maps to 423-602 (GYEVGRVNGL…NEVLEHVLED (180 aa)). Residues Ser-509 and Lys-552 contribute to the active site.

It belongs to the peptidase S16 family. Archaeal LonB subfamily. In terms of assembly, homohexamer. Organized in a ring with a central cavity.

The protein resides in the cell membrane. In terms of biological role, ATP-dependent serine protease that mediates the selective degradation of mutant and abnormal proteins as well as certain short-lived regulatory proteins. Degrades polypeptides processively. The polypeptide is Archaeal Lon protease (Archaeoglobus fulgidus (strain ATCC 49558 / DSM 4304 / JCM 9628 / NBRC 100126 / VC-16)).